We begin with the raw amino-acid sequence, 128 residues long: NHP2-like protein 1 (128 aa).

Positions 36 to 48 (RKGANEATKTLNR) are interaction with U4 snRNA and U4atac snRNA. The interval 96-128 (SRPVIACSVTIKEGSQLKPQIQSVQQAIERLLV) is important for U4 snRNA-binding.

This sequence belongs to the eukaryotic ribosomal protein eL8 family. Identified in the spliceosome B complex. Component of the U4/U6-U5 tri-snRNP complex. Part of the small subunit (SSU) processome, composed of more than 70 proteins and the RNA chaperone small nucleolar RNA (snoRNA) U3.

The protein resides in the nucleus. Its subcellular location is the nucleolus. Functionally, part of the small subunit (SSU) processome, first precursor of the small eukaryotic ribosomal subunit. During the assembly of the SSU processome in the nucleolus, many ribosome biogenesis factors, an RNA chaperone and ribosomal proteins associate with the nascent pre-rRNA and work in concert to generate RNA folding, modifications, rearrangements and cleavage as well as targeted degradation of pre-ribosomal RNA by the RNA exosome. Involved in pre-mRNA splicing as component of the spliceosome. Binds to the 5'-stem-loop of U4 snRNA and thereby contributes to spliceosome assembly. The protein undergoes a conformational change upon RNA-binding. Core component of box C/D small nucleolar ribonucleoprotein (snoRNP) complexes that function in methylation of multiple sites on ribosomal RNAs (rRNAs) and messenger RNAs (mRNAs). This chain is NHP2-like protein 1, found in Xenopus laevis (African clawed frog).